The chain runs to 404 residues: Mevalonate kinase (404 aa).

Residues K12, S130, and 135-141 (GAGLGSS) each bind ATP. Residues S141 and E184 each coordinate Mg(2+). The Proton acceptor role is filled by D195.

It belongs to the GHMP kinase family. Mevalonate kinase subfamily. In terms of assembly, homodimer. Mg(2+) is required as a cofactor.

It localises to the cytoplasm. The protein localises to the nucleus. The enzyme catalyses (R)-mevalonate + ATP = (R)-5-phosphomevalonate + ADP + H(+). It participates in isoprenoid biosynthesis; isopentenyl diphosphate biosynthesis via mevalonate pathway; isopentenyl diphosphate from (R)-mevalonate: step 1/3. Its activity is regulated as follows. Farnesyl pyrophosphate and geranyl pyrophosphate inhibit mevalonate kinase by binding competitively at the ATP-binding site. Functionally, mevalonate kinase; part of the second module of ergosterol biosynthesis pathway that includes the middle steps of the pathway. Erg12 converts mevalonate into 5-phosphomevalonate. The second module is carried out in the vacuole and involves the formation of farnesyl diphosphate, which is also an important intermediate in the biosynthesis of ubiquinone, dolichol, heme and prenylated proteins. Activity by the mevalonate kinase erg12 first converts mevalonate into 5-phosphomevalonate. 5-phosphomevalonate is then further converted to 5-diphosphomevalonate by the phosphomevalonate kinase erg8. The diphosphomevalonate decarboxylase mvd1 then produces isopentenyl diphosphate. The isopentenyl-diphosphate delta-isomerase idi1 then catalyzes the 1,3-allylic rearrangement of the homoallylic substrate isopentenyl (IPP) to its highly electrophilic allylic isomer, dimethylallyl diphosphate (DMAPP). Finally the farnesyl diphosphate synthase fps1 catalyzes the sequential condensation of isopentenyl pyrophosphate with dimethylallyl pyrophosphate, and then with the resultant geranylpyrophosphate to the ultimate product farnesyl pyrophosphate. This chain is Mevalonate kinase (erg12), found in Schizosaccharomyces pombe (strain 972 / ATCC 24843) (Fission yeast).